The primary structure comprises 525 residues: Probable metalloreductase AIM14 (525 aa).

A run of 7 helical transmembrane segments spans residues N13–V33, P52–V72, F82–P102, L118–V138, F152–F172, L179–A199, and V203–L223. The region spanning F82–A194 is the Ferric oxidoreductase domain. The FAD-binding FR-type domain occupies G215–P344. Residues L407 to D478 form a disordered region. Residues E410–G438 show a composition bias toward acidic residues. Residues G453–A463 show a composition bias toward basic and acidic residues.

Belongs to the ferric reductase (FRE) family. AIM14 subfamily.

The protein localises to the membrane. Functionally, probable cell surface metalloreductase. May be involved in iron or copper homeostasis. The polypeptide is Probable metalloreductase AIM14 (AIM14) (Yarrowia lipolytica (strain CLIB 122 / E 150) (Yeast)).